The chain runs to 478 residues: Hexokinase (478 aa).

The Hexokinase domain maps to 21–465 (EYLLKELTEL…LGAGAAIIAA (445 aa)). Positions 75–208 (TGKEMGDYLA…KVPIEVVALI (134 aa)) are hexokinase small subdomain. Lys-111 is a binding site for ATP. The interval 151 to 177 (PLGFTFSYPASQGSINEGYLQRWTKGF) is glucose-binding. The hexokinase large subdomain stretch occupies residues 209–454 (NDTTGTLVAS…DPIVIVPAED (246 aa)).

This sequence belongs to the hexokinase family. In terms of assembly, monomer.

It catalyses the reaction a D-hexose + ATP = a D-hexose 6-phosphate + ADP + H(+). The catalysed reaction is D-fructose + ATP = D-fructose 6-phosphate + ADP + H(+). The enzyme catalyses D-glucose + ATP = D-glucose 6-phosphate + ADP + H(+). Its pathway is carbohydrate metabolism; hexose metabolism. The protein operates within carbohydrate degradation; glycolysis; D-glyceraldehyde 3-phosphate and glycerone phosphate from D-glucose: step 1/4. Its function is as follows. Catalyzes the phosphorylation of hexose, such as D-glucose and D-fructose, to hexose 6-phosphate (D-glucose 6-phosphate and D-fructose 6-phosphate, respectively). Mediates the initial step of glycolysis by catalyzing phosphorylation of D-glucose to D-glucose 6-phosphate. In Schwanniomyces occidentalis (Yeast), this protein is Hexokinase (HXK).